A 119-amino-acid chain; its full sequence is Large ribosomal subunit protein uL18 (119 aa).

The protein belongs to the universal ribosomal protein uL18 family. As to quaternary structure, part of the 50S ribosomal subunit; part of the 5S rRNA/L5/L18/L25 subcomplex. Contacts the 5S and 23S rRNAs.

This is one of the proteins that bind and probably mediate the attachment of the 5S RNA into the large ribosomal subunit, where it forms part of the central protuberance. This chain is Large ribosomal subunit protein uL18, found in Xylella fastidiosa (strain M23).